A 281-amino-acid polypeptide reads, in one-letter code: Diaminopimelate epimerase (281 aa).

Substrate-binding residues include Asn13, Gln46, and Asn66. Residue Cys75 is the Proton donor of the active site. Residues 76 to 77, Asn160, Asn193, and 211 to 212 contribute to the substrate site; these read GN and ER. Catalysis depends on Cys220, which acts as the Proton acceptor. 221-222 provides a ligand contact to substrate; the sequence is GT.

The protein belongs to the diaminopimelate epimerase family. Homodimer.

Its subcellular location is the cytoplasm. The catalysed reaction is (2S,6S)-2,6-diaminopimelate = meso-2,6-diaminopimelate. It participates in amino-acid biosynthesis; L-lysine biosynthesis via DAP pathway; DL-2,6-diaminopimelate from LL-2,6-diaminopimelate: step 1/1. Its function is as follows. Catalyzes the stereoinversion of LL-2,6-diaminopimelate (L,L-DAP) to meso-diaminopimelate (meso-DAP), a precursor of L-lysine and an essential component of the bacterial peptidoglycan. The polypeptide is Diaminopimelate epimerase (Acinetobacter baumannii (strain AB307-0294)).